We begin with the raw amino-acid sequence, 658 residues long: Integrator complex subunit 9 (658 aa).

Lysine 58 is covalently cross-linked (Glycyl lysine isopeptide (Lys-Gly) (interchain with G-Cter in SUMO2)). The disordered stretch occupies residues 548–572 (DNKHVLQPPPKPTQPTSSKKRKRVN). Positions 566-570 (KKRKR) match the Nuclear localization signal motif.

Belongs to the metallo-beta-lactamase superfamily. RNA-metabolizing metallo-beta-lactamase-like family. INTS9 subfamily. In terms of assembly, component of the Integrator complex, composed of core subunits INTS1, INTS2, INTS3, INTS4, INTS5, INTS6, INTS7, INTS8, INTS9/RC74, INTS10, INTS11/CPSF3L, INTS12, INTS13, INTS14 and INTS15. The core complex associates with protein phosphatase 2A subunits PPP2CA and PPP2R1A, to form the Integrator-PP2A (INTAC) complex. INTS9 is part of the RNA endonuclease subcomplex, composed of INTS4, INTS9, INTS11 and inositol hexakisphosphate (InsP6). Interacts with WDR73; interaction is required for the assembly of the RNA endonuclease subcomplex in the cytoplasm. Interacts with BRAT1; interaction is required for the assembly of the RNA endonuclease subcomplex. Interacts with ESRRB, ESRRB is not a core component of the Integrator complex and this association is a bridge for the interaction with the multiprotein complex Integrator; attracts the transcriptional machinery.

It localises to the nucleus. It is found in the cytoplasm. Component of the integrator complex, a multiprotein complex that terminates RNA polymerase II (Pol II) transcription in the promoter-proximal region of genes. The integrator complex provides a quality checkpoint during transcription elongation by driving premature transcription termination of transcripts that are unfavorably configured for transcriptional elongation: the complex terminates transcription by (1) catalyzing dephosphorylation of the C-terminal domain (CTD) of Pol II subunit POLR2A/RPB1 and SUPT5H/SPT5, (2) degrading the exiting nascent RNA transcript via endonuclease activity and (3) promoting the release of Pol II from bound DNA. The integrator complex is also involved in terminating the synthesis of non-coding Pol II transcripts, such as enhancer RNAs (eRNAs), small nuclear RNAs (snRNAs), telomerase RNAs and long non-coding RNAs (lncRNAs). Mediates recruitment of cytoplasmic dynein to the nuclear envelope, probably as component of the integrator complex. The sequence is that of Integrator complex subunit 9 (Ints9) from Mus musculus (Mouse).